An 824-amino-acid polypeptide reads, in one-letter code: Lon protease (824 aa).

The disordered stretch occupies residues 1 to 23 (MNEPMSLFDDLPEEHDEPQEAPE). The segment covering 10-20 (DLPEEHDEPQE) has biased composition (acidic residues). Residues 26–222 (LPMVVLGEMV…KVYLVLARQL (197 aa)) enclose the Lon N-terminal domain. 375–382 (GPPGVGKT) contacts ATP. The region spanning 617-798 (QDEVGVATGV…DEVLRIALSR (182 aa)) is the Lon proteolytic domain. Catalysis depends on residues serine 704 and lysine 747. The tract at residues 800 to 824 (PTPANNQNGSHTNNRGQPSPAPAGT) is disordered. Residues 802–816 (PANNQNGSHTNNRGQ) are compositionally biased toward polar residues.

Belongs to the peptidase S16 family. As to quaternary structure, homohexamer. Organized in a ring with a central cavity.

It localises to the cytoplasm. It catalyses the reaction Hydrolysis of proteins in presence of ATP.. Functionally, ATP-dependent serine protease that mediates the selective degradation of mutant and abnormal proteins as well as certain short-lived regulatory proteins. Required for cellular homeostasis and for survival from DNA damage and developmental changes induced by stress. Degrades polypeptides processively to yield small peptide fragments that are 5 to 10 amino acids long. Binds to DNA in a double-stranded, site-specific manner. The protein is Lon protease of Chloroflexus aggregans (strain MD-66 / DSM 9485).